The sequence spans 123 residues: Antitoxin RnlB (123 aa).

Can form a complex with cognate toxin RnlA. Post-translationally, probably degraded by CplXP and Lon proteases.

Functionally, antitoxin component of a type II toxin-antitoxin (TA) system. A labile antitoxin (half-life of 2.1 minutes) that inhibits the endonuclease activity of cognate toxin RnlA but not that of non-cognate toxin LsoA. In Escherichia coli (strain K12), this protein is Antitoxin RnlB (rnlB).